Consider the following 424-residue polypeptide: UPF0415 protein C7orf25 homolog (424 aa).

It belongs to the UPF0415 family.

The protein is UPF0415 protein C7orf25 homolog of Xenopus tropicalis (Western clawed frog).